The following is a 200-amino-acid chain: Holliday junction branch migration complex subunit RuvA (200 aa).

A domain I region spans residues 1-64 (MITSIQGTLV…EDSQTLYGFA (64 aa)). The interval 65 to 144 (SPAERDFFRL…ATGAAPGLAT (80 aa)) is domain II. The flexible linker stretch occupies residues 145–151 (QPAAAAS). The interval 152 to 200 (PGASAHRDAVAALVALGYRSADADEAVRRASLALGEAATTESLIKKALS) is domain III.

It belongs to the RuvA family. In terms of assembly, homotetramer. Forms an RuvA(8)-RuvB(12)-Holliday junction (HJ) complex. HJ DNA is sandwiched between 2 RuvA tetramers; dsDNA enters through RuvA and exits via RuvB. An RuvB hexamer assembles on each DNA strand where it exits the tetramer. Each RuvB hexamer is contacted by two RuvA subunits (via domain III) on 2 adjacent RuvB subunits; this complex drives branch migration. In the full resolvosome a probable DNA-RuvA(4)-RuvB(12)-RuvC(2) complex forms which resolves the HJ.

The protein localises to the cytoplasm. In terms of biological role, the RuvA-RuvB-RuvC complex processes Holliday junction (HJ) DNA during genetic recombination and DNA repair, while the RuvA-RuvB complex plays an important role in the rescue of blocked DNA replication forks via replication fork reversal (RFR). RuvA specifically binds to HJ cruciform DNA, conferring on it an open structure. The RuvB hexamer acts as an ATP-dependent pump, pulling dsDNA into and through the RuvAB complex. HJ branch migration allows RuvC to scan DNA until it finds its consensus sequence, where it cleaves and resolves the cruciform DNA. The polypeptide is Holliday junction branch migration complex subunit RuvA (Opitutus terrae (strain DSM 11246 / JCM 15787 / PB90-1)).